A 316-amino-acid polypeptide reads, in one-letter code: Transaldolase 2 (316 aa).

Lysine 131 acts as the Schiff-base intermediate with substrate in catalysis.

This sequence belongs to the transaldolase family. Type 1 subfamily. Homodimer.

It is found in the cytoplasm. It catalyses the reaction D-sedoheptulose 7-phosphate + D-glyceraldehyde 3-phosphate = D-erythrose 4-phosphate + beta-D-fructose 6-phosphate. It functions in the pathway carbohydrate degradation; pentose phosphate pathway; D-glyceraldehyde 3-phosphate and beta-D-fructose 6-phosphate from D-ribose 5-phosphate and D-xylulose 5-phosphate (non-oxidative stage): step 2/3. Its function is as follows. Transaldolase is important for the balance of metabolites in the pentose-phosphate pathway. This is Transaldolase 2 from Shigella sonnei (strain Ss046).